A 466-amino-acid chain; its full sequence is Methylenomycin A resistance protein (466 aa).

Helical transmembrane passes span 16 to 36 (ISVL…VTVV), 56 to 76 (WVVD…GALA), 83 to 103 (TIYI…AASI), 113 to 133 (LIQG…LAAS), 146 to 166 (LWAA…GVLV), 168 to 188 (LAGW…ALIS), 203 to 223 (VNII…YALI), 234 to 254 (VILV…LREI), 276 to 296 (FIGF…SLFL), 305 to 325 (FMAG…NLLF), 337 to 357 (LMFV…VLIS), 367 to 387 (VLMS…TTVI), 409 to 429 (IGAL…ATWY), and 434 to 454 (FAFL…WLFL).

The protein belongs to the major facilitator superfamily. EmrB family.

The protein localises to the cell membrane. In terms of biological role, resistance to the epoxide antibiotic methylenomycin. The protein is Methylenomycin A resistance protein (mmr) of Bacillus subtilis (strain 168).